A 304-amino-acid polypeptide reads, in one-letter code: Hairy/enhancer-of-split related with YRPW motif protein 1 (304 aa).

The tract at residues 1–52 (MKRAHPEYSSSESELDETIEVEKESADENGNLSSALGSMSPTTSSQILARKR) is disordered. The segment covering 28-47 (ENGNLSSALGSMSPTTSSQI) has biased composition (polar residues). The interval 48-117 (LARKRRRGII…GGKGYFDAHA (70 aa)) is transcriptional repression and interaction with NCOR1 and SIN3A. A bHLH domain is found at 49–104 (ARKRRRGIIEKRRRDRINNSLSELRRLVPSAFEKQGSAKLEKAEILQMTVDHLKML). Positions 122 to 158 (YRSLGFRECLAEVARYLSIIEGLDASDPLRVRLVSHL) constitute an Orange domain. The span at 197–211 (SQSTHGNTGTSASPT) shows a compositional bias: polar residues. The segment at 197–234 (SQSTHGNTGTSASPTESHHQGRLATAHPEASALRAPPS) is disordered. The short motif at 294–297 (YRPW) is the YRPW motif element.

Belongs to the HEY family. In terms of assembly, self-associates. Interacts with HES1 and HEYL. Interacts with HDAC1, NCOR1 and SIN3A. Interacts with GATA4 and GATA6. Interacts with CCDC89/BOIP.

Its subcellular location is the nucleus. Transcriptional repressor which binds preferentially to the canonical E box sequence 5'-CACGTG-3'. Downstream effector of Notch signaling required for cardiovascular development. Specifically required for the Notch-induced endocardial epithelial to mesenchymal transition, which is itself criticial for cardiac valve and septum development. May be required in conjunction with HEY2 to specify arterial cell fate or identity. Promotes maintenance of neuronal precursor cells and glial versus neuronal fate specification. Represses transcription by the cardiac transcriptional activators GATA4 and GATA6 and by the neuronal bHLH factors ASCL1/MASH1 and NEUROD4/MATH3. This is Hairy/enhancer-of-split related with YRPW motif protein 1 (HEY1) from Bos taurus (Bovine).